We begin with the raw amino-acid sequence, 336 residues long: Deoxyhypusine hydroxylase (336 aa).

HEAT-like PBS-type repeat units lie at residues 68-94 and 101-127; these read LKHELAYCLGQTRNTDALPFLLDVVQD and CRHEAAEALGALGYESSLEVLKALRDN. Positions 70, 71, 103, and 104 each coordinate Fe cation. The interval 158-179 is disordered; it reads LKPSDFTSIDPAPPMPLTAKEP. HEAT-like PBS-type repeat units follow at residues 235 to 261 and 268 to 295; these read FRHEIAFVFGQLCHPASVPSLTETLSD and VRHEAAEALGSLGDVEGVEDTLKKFLND. Residues H237, E238, H270, and E271 each contribute to the Fe cation site.

The protein belongs to the deoxyhypusine hydroxylase family. Requires Fe(2+) as cofactor.

Its subcellular location is the cytoplasm. It is found in the nucleus. The catalysed reaction is [eIF5A protein]-deoxyhypusine + AH2 + O2 = [eIF5A protein]-hypusine + A + H2O. Its pathway is protein modification; eIF5A hypusination. Its function is as follows. Catalyzes the hydroxylation of the N(6)-(4-aminobutyl)-L-lysine intermediate to form hypusine, an essential post-translational modification only found in mature eIF-5A factor. In Emericella nidulans (strain FGSC A4 / ATCC 38163 / CBS 112.46 / NRRL 194 / M139) (Aspergillus nidulans), this protein is Deoxyhypusine hydroxylase (lia1).